Here is a 278-residue protein sequence, read N- to C-terminus: Rhomboid protease GlpG (278 aa).

6 helical membrane-spanning segments follow: residues 95–115 (GPLTLGVMALCIVVYILMQIL), 143–163 (AFLHFSLLHITFNLLWWWYLG), 170–190 (LGSGKLFVLAVVSAFFSGWAQ), 192–212 (LFSGALFGGLSGVVYALMGYC), 224–241 (LMLPRGLMVFSVLWLVAG), and 245–267 (ILGMSIANAAHVAGLVLGLLMAF). Ser202 acts as the Nucleophile in catalysis. His255 is an active-site residue.

This sequence belongs to the peptidase S54 family.

It localises to the cell inner membrane. It catalyses the reaction Cleaves type-1 transmembrane domains using a catalytic dyad composed of serine and histidine that are contributed by different transmembrane domains.. Functionally, rhomboid-type serine protease that catalyzes intramembrane proteolysis. This is Rhomboid protease GlpG from Serratia proteamaculans (strain 568).